Reading from the N-terminus, the 253-residue chain is Sortase SrtE2 (253 aa).

The segment covering 1-11 has biased composition (basic and acidic residues); that stretch reads MAATTDTEHQE. A disordered region spans residues 1–23; it reads MAATTDTEHQEQAGTGGRGRRRP. Residues 30-50 traverse the membrane as a helical segment; the sequence is AVSVLGELLITAGLVMGLFVV. The segment at 69–89 is disordered; the sequence is EKVRDDWAQDRVGGSGQDGPG. C220 is a catalytic residue.

It belongs to the bacterial sortase family. Class E subfamily.

The protein resides in the cell membrane. The catalysed reaction is The enzyme catalyzes a cell wall sorting reaction in which a surface protein with a sorting signal containing a LPXTG motif is cleaved between the Thr and Gly residue. The resulting threonine carboxyl end of the protein is covalently attached to a pentaglycine cross-bridge of peptidoglycan.. In terms of biological role, transpeptidase that anchors surface proteins to the cell wall. Recognizes Leu-Ala-x-Thr-Gly and Leu-Pro-x-Thr-Gly, with a preference for the former. Unlike the S.aureus sortase it cleaves not only the Thr-Gly motif but also the Ala-X bond; an Ala-Glu bond is a better substrate than the Thr-Gly motif in vitro. Among its possible substrates are the chaplins ChpA, ChpB and ChpC; this enzyme is more important for ChpC attachment than is SrtE1. A double knockout mutant of srtE1 and srtE2 shows a developmental defect in aerial hyphae formation more dramatic than that due to chaplin deletion. The chain is Sortase SrtE2 from Streptomyces coelicolor (strain ATCC BAA-471 / A3(2) / M145).